The chain runs to 113 residues: Probable protein L3 (113 aa).

This Bos taurus (Bovine) protein is Probable protein L3.